The sequence spans 156 residues: ATP synthase subunit b (156 aa).

A helical transmembrane segment spans residues 11–31 (LIAFALFVWFCMKFVWPPIIN).

Belongs to the ATPase B chain family. F-type ATPases have 2 components, F(1) - the catalytic core - and F(0) - the membrane proton channel. F(1) has five subunits: alpha(3), beta(3), gamma(1), delta(1), epsilon(1). F(0) has three main subunits: a(1), b(2) and c(10-14). The alpha and beta chains form an alternating ring which encloses part of the gamma chain. F(1) is attached to F(0) by a central stalk formed by the gamma and epsilon chains, while a peripheral stalk is formed by the delta and b chains.

It is found in the cell inner membrane. In terms of biological role, f(1)F(0) ATP synthase produces ATP from ADP in the presence of a proton or sodium gradient. F-type ATPases consist of two structural domains, F(1) containing the extramembraneous catalytic core and F(0) containing the membrane proton channel, linked together by a central stalk and a peripheral stalk. During catalysis, ATP synthesis in the catalytic domain of F(1) is coupled via a rotary mechanism of the central stalk subunits to proton translocation. Component of the F(0) channel, it forms part of the peripheral stalk, linking F(1) to F(0). This chain is ATP synthase subunit b, found in Haemophilus influenzae (strain PittEE).